The sequence spans 319 residues: HPr kinase/phosphorylase (319 aa).

Active-site residues include histidine 146 and lysine 167. Glycine 161–serine 168 serves as a coordination point for ATP. Serine 168 lines the Mg(2+) pocket. Residue aspartate 185 is the Proton acceptor; for phosphorylation activity. Proton donor; for dephosphorylation activity of the active site. Residues leucine 209 to aspartate 218 are important for the catalytic mechanism of both phosphorylation and dephosphorylation. Glutamate 210 is a binding site for Mg(2+). Residue arginine 252 is part of the active site. Positions glutamine 273 to arginine 278 are important for the catalytic mechanism of dephosphorylation.

The protein belongs to the HPrK/P family. In terms of assembly, homohexamer. The cofactor is Mg(2+).

The catalysed reaction is [HPr protein]-L-serine + ATP = [HPr protein]-O-phospho-L-serine + ADP + H(+). It catalyses the reaction [HPr protein]-O-phospho-L-serine + phosphate + H(+) = [HPr protein]-L-serine + diphosphate. Its function is as follows. Catalyzes the ATP- as well as the pyrophosphate-dependent phosphorylation of a specific serine residue in HPr, a phosphocarrier protein of the phosphoenolpyruvate-dependent sugar phosphotransferase system (PTS). HprK/P also catalyzes the pyrophosphate-producing, inorganic phosphate-dependent dephosphorylation (phosphorolysis) of seryl-phosphorylated HPr (P-Ser-HPr). In Variovorax paradoxus (strain S110), this protein is HPr kinase/phosphorylase.